A 429-amino-acid polypeptide reads, in one-letter code: MTRSDELFEQAKKTIPGGVNSPVRAFSGVGGSPRFIEKADGAYIFDADGKKYIDYVGSWGPMILGHNHPKIREAVLKAVENGLSFGAPTELEITMAEKVIEMVPSIEQVRMVSSGTEATMSAIRLARGFTNRDKILKFEGCYHGHADCLLVKAGSGALTLGQPSSPGIPEDFAKHTLTATYNDLDSVKAIFEQYPEEISCIIIEPVAGNMNCIPPIDGFLQGLRAICDQYGALMIIDEVMTGFRVSKSGAQGHYGVTPDLTTLGKVIGGGMPVGAFGGRKDVMQFIAPTGPVYQAGTLSGNPIAMSAGLAQMEALCEEGVYEQLAAKTQYIAEGFKAAANKHGIPMAINYVGGMFGFFFTSEETVTNFAQVTKCDTALFAEFYHMMLDEGVYLAPSAYEAGFLSLAHGEEELEATLAAADRVFAKLAKA.

The residue at position 265 (Lys265) is an N6-(pyridoxal phosphate)lysine.

Belongs to the class-III pyridoxal-phosphate-dependent aminotransferase family. HemL subfamily. Homodimer. The cofactor is pyridoxal 5'-phosphate.

The protein resides in the cytoplasm. It carries out the reaction (S)-4-amino-5-oxopentanoate = 5-aminolevulinate. It functions in the pathway porphyrin-containing compound metabolism; protoporphyrin-IX biosynthesis; 5-aminolevulinate from L-glutamyl-tRNA(Glu): step 2/2. This Shewanella pealeana (strain ATCC 700345 / ANG-SQ1) protein is Glutamate-1-semialdehyde 2,1-aminomutase.